A 135-amino-acid chain; its full sequence is M-zodatoxin-Lt8q (135 aa).

A signal peptide spans 1-20; that stretch reads MKYFVVALALVAAFACIAES. Residues 21 to 60 constitute a propeptide that is removed on maturation; the sequence is KPAESEHELAEVEEENELADLEDAVWLEHLADLSDLEEAR.

It belongs to the cationic peptide 06 (cytoinsectotoxin) family. In terms of tissue distribution, expressed by the venom gland.

The protein localises to the secreted. Functionally, insecticidal, cytolytic and antimicrobial peptide. Forms voltage-dependent, ion-permeable channels in membranes. At high concentration causes cell membrane lysis. The chain is M-zodatoxin-Lt8q (cit 1-16) from Lachesana tarabaevi (Spider).